The sequence spans 224 residues: Thymidylate kinase (224 aa).

7 to 14 (GIEGSGKS) lines the ATP pocket.

This sequence belongs to the thymidylate kinase family.

The catalysed reaction is dTMP + ATP = dTDP + ADP. Functionally, phosphorylation of dTMP to form dTDP in both de novo and salvage pathways of dTTP synthesis. This Nitratidesulfovibrio vulgaris (strain DP4) (Desulfovibrio vulgaris) protein is Thymidylate kinase.